Reading from the N-terminus, the 274-residue chain is MKKYLLGIGLILALIACKQNVSSLDEKNSVSVDLPGGMTVLVSKEKDKDGKYSLDATVDKLELKGTSDKNNGSGTLEGEKTDKSKVKLTIADDLSQTKFEIFKEDGKTLVSKKVTLKDKSSTEEKFNEKGETSEKTIVRANGTRLEYTDIKSDGSGKAKEVLKDFTLEGTLAADGKTTLKVTEGTVVLSKNILKSGEITVALDDSDTTQATKKTGNWDSKSSTLTISVNSQKTKNLVFTKEDTITVQKYDSAGTNLEGKAVEITTLKELKAALK.

The N-terminal stretch at 1–16 is a signal peptide; the sequence is MKKYLLGIGLILALIA. Cys-17 is lipidated: N-palmitoyl cysteine. Residue Cys-17 is the site of S-diacylglycerol cysteine attachment.

The protein belongs to the OspA lipoprotein family.

The protein localises to the cell outer membrane. Its subcellular location is the cell surface. The protein is Outer surface protein A of Borreliella burgdorferi (Lyme disease spirochete).